A 293-amino-acid chain; its full sequence is Elongation factor Ts (293 aa).

Residues 80–83 form an involved in Mg(2+) ion dislocation from EF-Tu region; sequence TDFV.

The protein belongs to the EF-Ts family.

It is found in the cytoplasm. Its function is as follows. Associates with the EF-Tu.GDP complex and induces the exchange of GDP to GTP. It remains bound to the aminoacyl-tRNA.EF-Tu.GTP complex up to the GTP hydrolysis stage on the ribosome. The chain is Elongation factor Ts from Burkholderia ambifaria (strain MC40-6).